Reading from the N-terminus, the 755-residue chain is Actin-related protein 5 (755 aa).

Ser-7 carries the phosphoserine modification. Lys-12 is covalently cross-linked (Glycyl lysine isopeptide (Lys-Gly) (interchain with G-Cter in ubiquitin)). Thr-24 carries the post-translational modification Phosphothreonine. Position 383 is a phosphoserine (Ser-383). The tract at residues 418 to 444 is disordered; that stretch reads QRFLKASQDARQKAKEEKERVAKEEEE. Over residues 425 to 444 the composition is skewed to basic and acidic residues; that stretch reads QDARQKAKEEKERVAKEEEE.

It belongs to the actin family. As to quaternary structure, component of the chromatin-remodeling INO80 complex, at least composed of ARP4, ARP5, ARP8, RVB1, RVB2, TAF14, NHP10, IES1, IES3, IES4, IES6, ACT1, IES2, IES5 and INO80.

It localises to the nucleus. Functionally, probably involved in transcription regulation via its interaction with the INO80 complex, a chromatin remodeling complex. In Saccharomyces cerevisiae (strain ATCC 204508 / S288c) (Baker's yeast), this protein is Actin-related protein 5 (ARP5).